A 542-amino-acid polypeptide reads, in one-letter code: uncharacterized protein (542 aa).

5 consecutive transmembrane segments (helical) span residues 4–23 (FVEN…LLLG), 28–47 (FGFR…FSTI), 51–70 (ITVP…YTIG), 91–113 (LALG…LGLA), and 160–182 (YSLT…GGLF). RCK C-terminal domains lie at 190-272 (AKNA…LLGE) and 274-355 (VDGH…IFGD). A run of 5 helical transmembrane segments spans residues 363-385 (FNLV…EFPL), 390-412 (ALSL…MGRT), 425-447 (LALR…GAGF), 457-479 (LLII…VIGH), and 519-541 (YTSV…LFLL).

This sequence belongs to the AAE transporter (TC 2.A.81) family.

Its subcellular location is the cell membrane. This is an uncharacterized protein from Corynebacterium efficiens (strain DSM 44549 / YS-314 / AJ 12310 / JCM 11189 / NBRC 100395).